The sequence spans 510 residues: Glutamate--tRNA ligase (510 aa).

Residues 15-25 (PSPTGDPHVGT) carry the 'HIGH' region motif. The 'KMSKS' region signature appears at 256–260 (KISKR). Residue K259 coordinates ATP.

The protein belongs to the class-I aminoacyl-tRNA synthetase family. Glutamate--tRNA ligase type 1 subfamily. In terms of assembly, monomer.

The protein localises to the cytoplasm. The catalysed reaction is tRNA(Glu) + L-glutamate + ATP = L-glutamyl-tRNA(Glu) + AMP + diphosphate. Its function is as follows. Catalyzes the attachment of glutamate to tRNA(Glu) in a two-step reaction: glutamate is first activated by ATP to form Glu-AMP and then transferred to the acceptor end of tRNA(Glu). The sequence is that of Glutamate--tRNA ligase from Fusobacterium nucleatum subsp. nucleatum (strain ATCC 25586 / DSM 15643 / BCRC 10681 / CIP 101130 / JCM 8532 / KCTC 2640 / LMG 13131 / VPI 4355).